A 266-amino-acid polypeptide reads, in one-letter code: MPISIPKGEKLMDLLSMKGKVTIVTGASGPRGMGIEAARGIAEMGGNVALTYAGRKEGGEKNAAALEKEYGIKAKAYKLDVANYESCCQLVKDVIADFGQIDAFVANAGKTADSGVLDGEISAFEEVIQTDLLGVAYCAKAVGHHFKERQTGSFVITASMSGHIANFPQEQTSYNVAKAGCIHMARSLANEWRDFARVNSISPGYIDTGLSDFVDKETQKLWHSMIPMGRDGDAKELKAAYVYFCSDASTYTTGSDLVIDGGYCAR.

N107 and K140 together coordinate NADP(+). The active-site Proton donor is the S159. The NADP(+) site is built by Y174, K178, I206, and T208. The active-site Proton acceptor is the Y174. K178 acts as the Lowers pKa of active site Tyr in catalysis.

The protein belongs to the short-chain dehydrogenases/reductases (SDR) family. Homotetramer.

It carries out the reaction D-mannitol + NADP(+) = D-fructose + NADPH + H(+). In terms of biological role, catalyzes the interconversion between D-mannitol and D-fructose. Plays a key role in liamocins biosynthesis by providing the mannitol moity that is linked to 3,5-dihydroxydecanoic acid (provided by the HR-PKS PKS1) via ester bond formation catalyzed by the esterase EST1. This Aureobasidium melanogenum (Aureobasidium pullulans var. melanogenum) protein is NADP-dependent mannitol dehydrogenase.